A 400-amino-acid polypeptide reads, in one-letter code: CCA-adding enzyme (400 aa).

Gly-32 and Arg-35 together coordinate ATP. CTP is bound by residues Gly-32 and Arg-35. Residues Asp-45 and Asp-47 each contribute to the Mg(2+) site. Arg-116, Asp-159, Arg-162, Arg-165, and Arg-168 together coordinate ATP. Positions 116, 159, 162, 165, and 168 each coordinate CTP.

Belongs to the tRNA nucleotidyltransferase/poly(A) polymerase family. Bacterial CCA-adding enzyme type 3 subfamily. Homodimer. It depends on Mg(2+) as a cofactor.

It catalyses the reaction a tRNA precursor + 2 CTP + ATP = a tRNA with a 3' CCA end + 3 diphosphate. It carries out the reaction a tRNA with a 3' CCA end + 2 CTP + ATP = a tRNA with a 3' CCACCA end + 3 diphosphate. Its function is as follows. Catalyzes the addition and repair of the essential 3'-terminal CCA sequence in tRNAs without using a nucleic acid template. Adds these three nucleotides in the order of C, C, and A to the tRNA nucleotide-73, using CTP and ATP as substrates and producing inorganic pyrophosphate. tRNA 3'-terminal CCA addition is required both for tRNA processing and repair. Also involved in tRNA surveillance by mediating tandem CCA addition to generate a CCACCA at the 3' terminus of unstable tRNAs. While stable tRNAs receive only 3'-terminal CCA, unstable tRNAs are marked with CCACCA and rapidly degraded. The chain is CCA-adding enzyme from Limosilactobacillus fermentum (strain NBRC 3956 / LMG 18251) (Lactobacillus fermentum).